The primary structure comprises 235 residues: Serine protease SplA (235 aa).

An N-terminal signal peptide occupies residues 1–35; the sequence is MNENVMVKGLTALTILTSLGFAENISNQPHSIAKA. Residues H74, D113, and S189 each act as charge relay system in the active site.

It belongs to the peptidase S1B family.

It is found in the secreted. The sequence is that of Serine protease SplA (splA) from Staphylococcus aureus (strain MSSA476).